A 221-amino-acid chain; its full sequence is PKHD-type hydroxylase NATL1_16191 (221 aa).

The Fe2OG dioxygenase domain maps to 80-174 (LIHGVMFTQS…RHVCVGWIQS (95 aa)). Residues histidine 98, aspartate 100, and histidine 155 each coordinate Fe cation. Residue arginine 165 coordinates 2-oxoglutarate.

It depends on Fe(2+) as a cofactor. L-ascorbate serves as cofactor.

In Prochlorococcus marinus (strain NATL1A), this protein is PKHD-type hydroxylase NATL1_16191.